The chain runs to 865 residues: Rifampicin phosphotransferase (865 aa).

Residues 2-314 (SGRLVVDLQD…FHIVQSRPIT (313 aa)) are ATP-binding. The ATP site is built by K23, R117, G132, T136, Q183, E297, Q309, and R311. Positions 327-752 (FRVYLSVGHQ…TSEGVALSGA (426 aa)) are rifampicin-binding. Positions 403–430 (ENGEFEPTPAETDGGAPPAGDGAEPDEA) are disordered. Over residues 409-424 (PTPAETDGGAPPAGDG) the composition is skewed to low complexity. Residues 765–863 (GLAVSAGTVE…VHGTEGYIEL (99 aa)) are swivel phosphohistidine. The active-site Tele-phosphohistidine intermediate is the H823.

Belongs to the rifampicin phosphotransferase family.

It carries out the reaction rifampicin + ATP + H2O = 21-phosphorifampicin + AMP + phosphate + 2 H(+). Functionally, catalyzes the phosphorylation of rifampicin, also known as rifampin (RIF), leading to its inactivation. Confers high level resistance to a variety of clinically used rifamycin antibiotics. This Streptomyces sp protein is Rifampicin phosphotransferase.